Reading from the N-terminus, the 423-residue chain is Putative competence-damage inducible protein (423 aa).

It belongs to the CinA family.

The chain is Putative competence-damage inducible protein from Streptococcus pyogenes serotype M3 (strain ATCC BAA-595 / MGAS315).